The sequence spans 301 residues: Mitochondrial carnitine/acylcarnitine carrier protein (301 aa).

N-acetylalanine is present on alanine 2. Topologically, residues 2–12 (ADQPKPISPLK) are cytoplasmic. 3 Solcar repeats span residues 8 to 99 (ISPL…GKKL), 108 to 196 (LSYP…VKNI), and 207 to 293 (LSVP…AMKF). The chain crosses the membrane as a helical span at residues 13–31 (NLLAGGFGGVCLVFVGHPL). Residues 32–73 (DTVKVRLQTQPPSLPGQPPMYSGTFDCFRKTLFREGIRGLYR) are Mitochondrial matrix-facing. The helical transmembrane segment at 74-93 (GMAAPIIGVTPMFAVCFFGF) threads the bilayer. Residues 94–112 (GLGKKLQQKHPEDVLSYPQ) lie on the Cytoplasmic side of the membrane. Residues 113-131 (LFAAGMLSGIFTTGIMTPG) form a helical membrane-spanning segment. At 132-170 (ERIKCLLQIQASSGETKYTGTLDCAKKLYQEFGIRGIYK) the chain is on the mitochondrial matrix side. Residues lysine 148 and lysine 157 each carry the N6-acetyllysine modification. Position 170 is an N6-acetyllysine; alternate (lysine 170). Position 170 is an N6-succinyllysine; alternate (lysine 170). Residues 171–190 (GTVVTLMRDVPASGMYFMTY) traverse the membrane as a helical segment. Residues 191 to 211 (EWVKNIFTPEGKRVSELSVPR) lie on the Cytoplasmic side of the membrane. A helical transmembrane segment spans residues 212 to 230 (VLVAGGIAGIFNWAVAIPP). Over 231 to 267 (DVLKSRFQTAPPGKYPNGFRDVLRELIPDEGVTSLYK) the chain is Mitochondrial matrix. The helical transmembrane segment at 268-287 (GFNAVMIRAFPANAACFLGF) threads the bilayer. Over 288 to 301 (EVAMKFLNWATPNL) the chain is Cytoplasmic.

Belongs to the mitochondrial carrier (TC 2.A.29) family.

It localises to the mitochondrion inner membrane. It carries out the reaction O-acetyl-(R)-carnitine(in) + (R)-carnitine(out) = O-acetyl-(R)-carnitine(out) + (R)-carnitine(in). The enzyme catalyses an O-acyl-(R)-carnitine(in) + (R)-carnitine(out) = an O-acyl-(R)-carnitine(out) + (R)-carnitine(in). The catalysed reaction is O-propanoyl-(R)-carnitine(in) + (R)-carnitine(out) = O-propanoyl-(R)-carnitine(out) + (R)-carnitine(in). It catalyses the reaction O-hexadecanoyl-(R)-carnitine(in) + (R)-carnitine(out) = O-hexadecanoyl-(R)-carnitine(out) + (R)-carnitine(in). It carries out the reaction O-octanoyl-(R)-carnitine(in) + (R)-carnitine(out) = O-octanoyl-(R)-carnitine(out) + (R)-carnitine(in). The enzyme catalyses (R)-carnitine(in) = (R)-carnitine(out). Functionally, mediates the electroneutral exchange of acylcarnitines (O-acyl-(R)-carnitine or L-acylcarnitine) of different acyl chain lengths (ranging from O-acetyl-(R)-carnitine to long-chain O-acyl-(R)-carnitines) with free carnitine ((R)-carnitine or L-carnitine) across the mitochondrial inner membrane, via a ping-pong mechanism. Key player in the mitochondrial oxidation pathway, it translocates the fatty acids in the form of acylcarnitines into the mitochondrial matrix, where the carnitine palmitoyltransferase 2 (CPT-2) activates them to undergo fatty acid beta-oxidation. Catalyzes the unidirectional transport (uniport) of carnitine at lower rates than the antiport (exchange). The protein is Mitochondrial carnitine/acylcarnitine carrier protein (SLC25A20) of Macaca fascicularis (Crab-eating macaque).